The chain runs to 471 residues: MAGGVTGGAAGAWSDRFEQGLHPFVEAFNASIGFDLTLLQEDLDGSIAHARMLASCGVIAEEEAVQLVDGLELIRTEAADGRFNPGLEDEDVHFAVERRLIALVGSVGKKLHTGRSRNDQVGTDLRLWLRRRLDEIDGDLQRLQRALLDQADRHQSTMIPGYTHLQRAQPLCLAHHLLAYIEMLQRDRQRLGDVRGRVNICPLGAAALAGTPVPIDRRRTAEDLGFTAIYANSLDAVSDRDFCVEFSAAASLVMAHLSRLAEEVIAWASEEFGFVRLSDRCATGSSLMPQKKNPDVPELVRGKCGRVFGHLQGLLTMIKGLPLAYNKDFQEDKEALFDAYRTTRDCVEAMAILFEEGLEFRIDRLNQAVESDFSNATDVADYLVARGVPFREAYQLVGAVVRRCLEQDCLLRELSLEQWKEIHPAFEADLHEALAPRAVVSARRSEGGTGFDRVHEQVMLWQERLKESAVG.

It belongs to the lyase 1 family. Argininosuccinate lyase subfamily.

The protein localises to the cytoplasm. The enzyme catalyses 2-(N(omega)-L-arginino)succinate = fumarate + L-arginine. It functions in the pathway amino-acid biosynthesis; L-arginine biosynthesis; L-arginine from L-ornithine and carbamoyl phosphate: step 3/3. This Parasynechococcus marenigrum (strain WH8102) protein is Argininosuccinate lyase.